A 417-amino-acid polypeptide reads, in one-letter code: Tol-Pal system protein TolB (417 aa).

Residues 1-16 form the signal peptide; it reads MKYLWLFLIYAIGLFA.

It belongs to the TolB family. As to quaternary structure, the Tol-Pal system is composed of five core proteins: the inner membrane proteins TolA, TolQ and TolR, the periplasmic protein TolB and the outer membrane protein Pal. They form a network linking the inner and outer membranes and the peptidoglycan layer.

It is found in the periplasm. Part of the Tol-Pal system, which plays a role in outer membrane invagination during cell division and is important for maintaining outer membrane integrity. In Helicobacter pylori (strain J99 / ATCC 700824) (Campylobacter pylori J99), this protein is Tol-Pal system protein TolB.